The sequence spans 1156 residues: Condensin-2 complex subunit G2 (1156 aa).

One copy of the HEAT repeat lies at 460-498 (MLPALKFCLHDNSEKVRVAFVDMLLKIKAVRAAKFWKIC). The interval 587–611 (PNEDTEDEDDDEGDGEGIVRGDSEK) is disordered. Residues 589–601 (EDTEDEDDDEGDG) show a composition bias toward acidic residues.

As to quaternary structure, component of the condensin-2 complex, which contains the smc2 and smc4 heterodimer, and three non SMC subunits that probably regulate the complex: ncaph2, ncapd3 and ncapg2.

It is found in the nucleus. In terms of biological role, regulatory subunit of the condensin-2 complex, a complex which establishes mitotic chromosome architecture and is involved in physical rigidity of the chromatid axis. The polypeptide is Condensin-2 complex subunit G2 (ncapg2) (Xenopus laevis (African clawed frog)).